The primary structure comprises 315 residues: Glycine--tRNA ligase alpha subunit (315 aa).

It belongs to the class-II aminoacyl-tRNA synthetase family. In terms of assembly, tetramer of two alpha and two beta subunits.

The protein resides in the cytoplasm. It carries out the reaction tRNA(Gly) + glycine + ATP = glycyl-tRNA(Gly) + AMP + diphosphate. This chain is Glycine--tRNA ligase alpha subunit, found in Pseudomonas paraeruginosa (strain DSM 24068 / PA7) (Pseudomonas aeruginosa (strain PA7)).